The chain runs to 1394 residues: Cyclic nucleotide-gated channel beta-1 (1394 aa).

Disordered stretches follow at residues 1-95 (MLGW…AHSS), 112-253 (VPQP…QDSA), and 271-675 (VIRG…SQNS). At 1–762 (MLGWVQRVLP…WKKYQFPQSI (762 aa)) the chain is on the cytoplasmic side. Polar residues-rich tracts occupy residues 68–86 (PQGT…QAQV) and 116–125 (AHSSRPSQNI). Composition is skewed to basic and acidic residues over residues 300–312 (EESH…VDPH) and 336–355 (DEEK…RIQE). The segment covering 356–387 (EKEDEEEEKEDGEEEEEEGREKEEEEGEEKEE) has biased composition (acidic residues). Positions 388 to 408 (EEGREKEEEEGEKKEEEGREK) are enriched in basic and acidic residues. Positions 409-418 (EEEEGGEKED) are enriched in acidic residues. Basic and acidic residues predominate over residues 419 to 433 (EEGREKEEEEGRGKE). Composition is skewed to acidic residues over residues 452-464 (EGRE…EEEQ) and 481-490 (DRSEESETQD). Composition is skewed to low complexity over residues 493–508 (EVGG…GAQA) and 529–554 (EVGG…AQDQ). The span at 654–675 (DPTSPQGTDDQDRATSTASQNS) shows a compositional bias: polar residues. The calmodulin-binding CaM1 stretch occupies residues 671-681 (ASQNSAIINDR). The IQ-like signature appears at 682 to 692 (LQELVKLFKER). The segment at 699–732 (KLIDPDVTSDEESPKPSPAKKAPEPAPEVKPAEA) is disordered. Residues 763–793 (DPLTNLMYILWLFFVVLAWNWNCWLIPVRWA) form a helical membrane-spanning segment. Over 794–798 (FPYQT) the chain is Extracellular. A helical membrane pass occupies residues 799 to 825 (PDNIHLWLLMDYLCDLIYLLDITVFQM). Residues 826–837 (RLQFVRGGDIIT) lie on the Cytoplasmic side of the membrane. A helical membrane pass occupies residues 838 to 861 (DKKEMRNNYVKSQRFKMDMLCLLP). The Extracellular segment spans residues 862–872 (LDLLYLKFGVN). The chain crosses the membrane as a helical span at residues 873 to 887 (PLLRLPRCLKYMAFF). Residues 888–900 (EFNNRLESILSKA) lie on the Cytoplasmic side of the membrane. The interval 900–999 (AYVYRVIRTT…IGQMRDVVGA (100 aa)) is ion conduction pathway. A helical membrane pass occupies residues 901–922 (YVYRVIRTTAYLLYSLHLNSCL). Over 923-931 (YYWASAYEG) the chain is Extracellular. Helical transmembrane passes span 932–974 (LGST…EIVF) and 975–1002 (QGLN…AATA). The tract at residues 959–962 (TIGG) is selectivity filter. Residues 1003 to 1394 (GQTYYRSCMD…EEARKEKEEE (392 aa)) lie on the Cytoplasmic side of the membrane. Residues 1082–1198 (RQMIFDMLKR…LLRKKARRML (117 aa)) are cyclic nucleotide-binding domain. Positions 1143, 1144, 1146, 1156, and 1157 each coordinate 3',5'-cyclic GMP. 3',5'-cyclic AMP is bound at residue arginine 1156. The segment at 1261 to 1267 (QQQLLEQ) is calmodulin-binding CaM2. The interval 1265-1394 (LEQAKSSEDA…EEARKEKEEE (130 aa)) is disordered. Over residues 1285–1326 (EQPPRPEPPAPEAPAPEPTAPEPLAPEAPAPEAPAPSSPPPA) the composition is skewed to pro residues. Composition is skewed to basic and acidic residues over residues 1329–1345 (ERPE…EHPV) and 1364–1376 (VPEK…KKEE).

The protein belongs to the cyclic nucleotide-gated cation channel (TC 1.A.1.5) family. CNGB1 subfamily. The rod cyclic nucleotide-gated channel is a heterotetramer composed of CNGA1 and CNGB1 subunits with 3:1 stoichiometry. CNGA1:CNGB1 channel binds Ca(2+)-bound CALM1 via CaM1 and CaM2 regions of the CNGB1 subunit; this interaction modulates the affinity of the channel for cNMPs in response to intracellular Ca(2+) levels. The olfactory cyclic nucleotide-gated channel is a heterotetramer composed of CNGA2, CNGA4 and CNGB1 subunits with 2:1:1 stoichiometry. In terms of tissue distribution, retina, testis, kidney, heart and brain.

The protein localises to the membrane. It catalyses the reaction Ca(2+)(in) = Ca(2+)(out). The catalysed reaction is Na(+)(in) = Na(+)(out). It carries out the reaction K(+)(in) = K(+)(out). The enzyme catalyses NH4(+)(in) = NH4(+)(out). It catalyses the reaction Rb(+)(in) = Rb(+)(out). The catalysed reaction is Li(+)(in) = Li(+)(out). It carries out the reaction Cs(+)(in) = Cs(+)(out). Its function is as follows. Pore-forming subunit of the rod cyclic nucleotide-gated channel. Mediates rod photoresponses at dim light converting transient changes in intracellular cGMP levels into electrical signals. In the dark, cGMP levels are high and keep the channel open enabling a steady inward current carried by Na(+) and Ca(2+) ions that leads to membrane depolarization and neurotransmitter release from synaptic terminals. Upon photon absorption cGMP levels decline leading to channel closure and membrane hyperpolarization that ultimately slows neurotransmitter release and signals the presence of light, the end point of the phototransduction cascade. Pore-forming subunit of the olfactory cyclic nucleotide-gated channel. Operates in the cilia of olfactory sensory neurons where chemical stimulation of the odorant is converted to an electrical signal. Mediates odorant-induced cAMP-dependent Ca(2+) influx triggering neuron depolarization. The rise of intracellular Ca(2+) levels potentiates the olfactory response by activating Ca(2+)-dependent Cl(-) channels, but it also serves as a negative feedback signal to desensitize the channel for rapid adaptation to odorants. Conducts cGMP- and cAMP-gated ion currents, with permeability for monovalent and divalent cations. The selectivity for Ca(2+) over Na(+) increases with cGMP concentrations, whereas the selectivity among monovalent ions is independent of the cGMP levels. The chain is Cyclic nucleotide-gated channel beta-1 from Bos taurus (Bovine).